We begin with the raw amino-acid sequence, 275 residues long: 4-hydroxy-tetrahydrodipicolinate reductase (275 aa).

NAD(+) contacts are provided by residues 13–18 and 108–110; these read GAGGKM and GTT. Catalysis depends on His-164, which acts as the Proton donor/acceptor. His-165 is a (S)-2,3,4,5-tetrahydrodipicolinate binding site. The Proton donor role is filled by Lys-168. 174-175 serves as a coordination point for (S)-2,3,4,5-tetrahydrodipicolinate; the sequence is GT.

The protein belongs to the DapB family.

The protein resides in the cytoplasm. The catalysed reaction is (S)-2,3,4,5-tetrahydrodipicolinate + NAD(+) + H2O = (2S,4S)-4-hydroxy-2,3,4,5-tetrahydrodipicolinate + NADH + H(+). It catalyses the reaction (S)-2,3,4,5-tetrahydrodipicolinate + NADP(+) + H2O = (2S,4S)-4-hydroxy-2,3,4,5-tetrahydrodipicolinate + NADPH + H(+). It participates in amino-acid biosynthesis; L-lysine biosynthesis via DAP pathway; (S)-tetrahydrodipicolinate from L-aspartate: step 4/4. Functionally, catalyzes the conversion of 4-hydroxy-tetrahydrodipicolinate (HTPA) to tetrahydrodipicolinate. This is 4-hydroxy-tetrahydrodipicolinate reductase from Picosynechococcus sp. (strain ATCC 27264 / PCC 7002 / PR-6) (Agmenellum quadruplicatum).